The sequence spans 120 residues: Flagellar transcriptional regulator FlhD (120 aa).

This sequence belongs to the FlhD family. As to quaternary structure, homodimer; disulfide-linked. Forms a heterohexamer composed of two FlhC and four FlhD subunits. Each FlhC binds a FlhD dimer, forming a heterotrimer, and a hexamer assembles by dimerization of two heterotrimers.

The protein localises to the cytoplasm. Functions in complex with FlhC as a master transcriptional regulator that regulates transcription of several flagellar and non-flagellar operons by binding to their promoter region. Activates expression of class 2 flagellar genes, including fliA, which is a flagellum-specific sigma factor that turns on the class 3 genes. Also regulates genes whose products function in a variety of physiological pathways. The protein is Flagellar transcriptional regulator FlhD of Erwinia tasmaniensis (strain DSM 17950 / CFBP 7177 / CIP 109463 / NCPPB 4357 / Et1/99).